Here is a 325-residue protein sequence, read N- to C-terminus: Cyclic AMP-responsive element-binding protein 1 (325 aa).

2 stretches are compositionally biased toward polar residues: residues Met-1–Gly-11 and Ala-18–Ala-27. 2 disordered regions span residues Met-1 to Ala-27 and Ser-92 to Ile-111. Positions Gln-85 to Thr-144 constitute a KID domain. Ser-117 is modified (phosphoserine; by CaMK1, CaMK2, CaMK4, PKB/AKT1 or PKB/AKT2, RPS6KA3, RPS6KA4, RPS6KA5 and SGK1). Lys-120 participates in a covalent cross-link: Glycyl lysine isopeptide (Lys-Gly) (interchain with G-Cter in SUMO2). The tract at residues Asp-124–Ala-146 is disordered. The residue at position 126 (Ser-126) is a Phosphoserine; by CaMK2. Residue Ser-255 is modified to Phosphoserine; by HIPK2. In terms of domain architecture, bZIP spans Ala-267–Asp-325. A basic motif region spans residues Arg-268 to Lys-293. Glycyl lysine isopeptide (Lys-Gly) (interchain with G-Cter in SUMO1) cross-links involve residues Lys-269 and Lys-288. The interval Leu-295 to Leu-316 is leucine-zipper.

The protein belongs to the bZIP family. Interacts with PPRC1. Binds DNA as a dimer. This dimer is stabilized by magnesium ions. Interacts, through the bZIP domain, with the coactivators CRTC1/TORC1, CRTC2/TORC2 and CRTC3/TORC3. When phosphorylated on Ser-117, binds CREBBP. Interacts with CREBL2; regulates CREB1 phosphorylation, stability and transcriptional activity. Interacts (phosphorylated form) with TOX3. Interacts with ARRB1. Binds to HIPK2. Interacts with SGK1. Interacts with TSSK4; this interaction facilitates phosphorylation on Ser-117. Forms a complex with KMT2A and CREBBP. Interacts with TOX4; CREB1 is required for full induction of TOX4-dependent activity and the interaction is increased by cAMP and inhibited by insulin. In terms of processing, sumoylated with SUMO1. Sumoylation on Lys-288, but not on Lys-269, is required for nuclear localization of this protein. Sumoylation is enhanced under hypoxia, promoting nuclear localization and stabilization. Stimulated by phosphorylation. Phosphorylation of both Ser-117 and Ser-126 in the SCN regulates the activity of CREB and participates in circadian rhythm generation. Phosphorylation of Ser-117 allows CREBBP binding. Phosphorylated upon calcium influx by CaMK4 and CaMK2 on Ser-117. CaMK4 is much more potent than CaMK2 in activating CREB. Phosphorylated by CaMK2 on Ser-126. Phosphorylation of Ser-126 blocks CREB-mediated transcription even when Ser-117 is phosphorylated. Phosphorylated by CaMK1. Phosphorylation of Ser-255 by HIPK2 in response to genotoxic stress promotes CREB1 activity, facilitating the recruitment of the coactivator CBP. Phosphorylated at Ser-117 by RPS6KA3, RPS6KA4 and RPS6KA5 in response to mitogenic or stress stimuli. CREBL2 positively regulates phosphorylation at Ser-117 thereby stimulating CREB1 transcriptional activity. In liver, phosphorylation is induced by fasting or glucagon in a circadian fashion. Phosphorylated by TSSK4 on Ser-117.

Its subcellular location is the nucleus. Its function is as follows. Phosphorylation-dependent transcription factor that stimulates transcription upon binding to the DNA cAMP response element (CRE), a sequence present in many viral and cellular promoters. Transcription activation is enhanced by the TORC coactivators which act independently of Ser-117 phosphorylation. Involved in different cellular processes including the synchronization of circadian rhythmicity and the differentiation of adipose cells. Regulates the expression of apoptotic and inflammatory response factors in cardiomyocytes in response to ERFE-mediated activation of AKT signaling. The sequence is that of Cyclic AMP-responsive element-binding protein 1 (CREB1) from Bos taurus (Bovine).